The chain runs to 184 residues: MNHTTQTQLFDFFERFKAHWQTQKKSLPQAIFEPQWISPCQIGEVENQLIFWSPIKREPALDMSNIEQALDIKLHPSIVDFFCSAYSAGLPAVYQDHPIELIQAWNDEDFNLLQENMLAHFMMQKRLKQPASMFIASCSDEMQIVSVLNATGEVQLETLGKGQEAILAENLADFLATLTPVIIE.

This sequence belongs to the Syd family.

Its subcellular location is the cell inner membrane. In terms of biological role, interacts with the SecY protein in vivo. May bind preferentially to an uncomplexed state of SecY, thus functioning either as a chelating agent for excess SecY in the cell or as a regulatory factor that negatively controls the translocase function. In Psychromonas ingrahamii (strain DSM 17664 / CCUG 51855 / 37), this protein is Protein Syd.